A 290-amino-acid chain; its full sequence is Porphobilinogen deaminase (290 aa).

Cys238 is subject to S-(dipyrrolylmethanemethyl)cysteine.

This sequence belongs to the HMBS family. Monomer. Dipyrromethane serves as cofactor.

The enzyme catalyses 4 porphobilinogen + H2O = hydroxymethylbilane + 4 NH4(+). It functions in the pathway porphyrin-containing compound metabolism; protoporphyrin-IX biosynthesis; coproporphyrinogen-III from 5-aminolevulinate: step 2/4. Its function is as follows. Tetrapolymerization of the monopyrrole PBG into the hydroxymethylbilane pre-uroporphyrinogen in several discrete steps. The chain is Porphobilinogen deaminase from Caldicellulosiruptor saccharolyticus (strain ATCC 43494 / DSM 8903 / Tp8T 6331).